A 393-amino-acid polypeptide reads, in one-letter code: Major outer membrane protein P.IA (393 aa).

An N-terminal signal peptide occupies residues 1 to 19; it reads MRKKLTALVLSALPLAAVA.

The protein belongs to the Gram-negative porin family. In terms of assembly, homotrimer.

It is found in the cell outer membrane. Functionally, serves as a slightly cation selective porin. Major antigen on the gonococcal cell surface and it may have pathogenic properties in addition to its porin activity. In Neisseria meningitidis serogroup C, this protein is Major outer membrane protein P.IA (porA).